The sequence spans 118 residues: UPF0102 protein ROP_66030 (118 aa).

Belongs to the UPF0102 family.

The polypeptide is UPF0102 protein ROP_66030 (Rhodococcus opacus (strain B4)).